A 462-amino-acid polypeptide reads, in one-letter code: Argininosuccinate lyase (462 aa).

Belongs to the lyase 1 family. Argininosuccinate lyase subfamily.

The protein resides in the cytoplasm. It catalyses the reaction 2-(N(omega)-L-arginino)succinate = fumarate + L-arginine. The protein operates within amino-acid biosynthesis; L-arginine biosynthesis; L-arginine from L-ornithine and carbamoyl phosphate: step 3/3. In Leuconostoc citreum (strain KM20), this protein is Argininosuccinate lyase.